The following is a 589-amino-acid chain: Zinc finger protein 703 (589 aa).

A disordered region spans residues 102-315 (SQIGKPDPPP…GTGHIAPVSP (214 aa)). Residues 113 to 122 (SKLGSLSSSS) show a composition bias toward low complexity. Residues 137 to 148 (SGEHQNLDDKSS) are compositionally biased toward basic and acidic residues. Polar residues predominate over residues 179 to 188 (NGSSSSVTCT). The segment covering 196 to 206 (SPRASSPQQTS) has biased composition (low complexity). A compositionally biased stretch (polar residues) spans 214 to 230 (QSQSPLSQKTAHLQTTH). Low complexity predominate over residues 237–250 (GSDPGNDSSSSGSD). The span at 251 to 262 (RNGKKDSDHNKS) shows a compositional bias: basic and acidic residues. Over residues 272–299 (SSHARASVNSSSASSSSSPQPDSKTDSQ) the composition is skewed to low complexity. The required for interaction with Groucho and hdac2 plays an important role in repression of transcription stretch occupies residues 408-460 (VHDPSSALKSGFPLMYPTHHLHSLHPSSLSSSATSSLSHPLYTYGFMLPNETL). Residues 462 to 490 (HACNWVSVGGPCDKRFATSEELLAHLRTH) form a C2H2-type zinc finger. Residues 498-589 (GKLLSGYPSS…LGSASALGYQ (92 aa)) are required for self-association and nuclear localization.

This sequence belongs to the Elbow/Noc family. As to quaternary structure, self-associates. Interacts with nlz2. May interact with Groucho corepressor proteins.

It is found in the nucleus. Its subcellular location is the cytoplasm. Functionally, transcriptional corepressor which does not bind directly to DNA and may regulate transcription through recruitment of histone deacetylases to gene promoters. Required for segmental gene expression during hindbrain development. May regulate cell adhesion, migration and proliferation. In Danio rerio (Zebrafish), this protein is Zinc finger protein 703 (znf703).